The following is a 152-amino-acid chain: Putative pseudoazurin (152 aa).

A signal peptide spans 1–23; that stretch reads MPLKFGLIVATAALIASAASLMA. Residues 28–116 form the Plastocyanin-like domain; that stretch reads VQMLNKGTDG…MGMVALIQVG (89 aa). His63, Cys101, His104, and Met109 together coordinate Cu cation.

It depends on Cu cation as a cofactor.

Its subcellular location is the periplasm. In terms of biological role, this soluble electron transfer copper protein is required for the inactivation of copper-containing nitrite reductase in the presence of oxygen. This chain is Putative pseudoazurin (azu), found in Rhizobium leguminosarum bv. viciae.